The following is a 403-amino-acid chain: D-galactonate dehydratase family member RspA (403 aa).

Substrate is bound by residues asparagine 37 and histidine 122. Tyrosine 159 functions as the Proton donor/acceptor in the catalytic mechanism. Aspartate 211 is a binding site for Mg(2+). Histidine 213 (proton donor/acceptor) is an active-site residue. Mg(2+) contacts are provided by glutamate 237 and glutamate 263. Substrate is bound by residues glutamate 263, arginine 284, histidine 313, aspartate 317, and glutamate 340.

The protein belongs to the mandelate racemase/muconate lactonizing enzyme family. GalD subfamily. Mg(2+) serves as cofactor.

It carries out the reaction D-mannonate = 2-dehydro-3-deoxy-D-gluconate + H2O. The enzyme catalyses D-gluconate = 2-dehydro-3-deoxy-D-gluconate + H2O. Has low dehydratase activity with D-mannonate and D-gluconate, suggesting that these are not physiological substrates and that it has no significant role in the in vivo degradation of these compounds. Has no detectable activity with a panel of 70 other acid sugars (in vitro). The protein is D-galactonate dehydratase family member RspA (rspA) of Halomonas elongata (strain ATCC 33173 / DSM 2581 / NBRC 15536 / NCIMB 2198 / 1H9).